Reading from the N-terminus, the 71-residue chain is Sodium channel neurotoxin MeuNaTxalpha-12 (71 aa).

Residues 1–6 form the signal peptide; the sequence is MTGVES. The LCN-type CS-alpha/beta domain occupies 8-70; the sequence is RDAYIAQGNN…VPIRIQGKCQ (63 aa). 4 disulfides stabilise this stretch: cysteine 18–cysteine 69, cysteine 22–cysteine 42, cysteine 28–cysteine 52, and cysteine 32–cysteine 54. Position 71 (arginine 71) is a propeptide, removed by a carboxypeptidase.

Belongs to the long (4 C-C) scorpion toxin superfamily. Sodium channel inhibitor family. Alpha subfamily. Expressed by the venom gland.

It localises to the secreted. In terms of biological role, alpha toxins bind voltage-independently at site-3 of sodium channels (Nav) and inhibit the inactivation of the activated channels, thereby blocking neuronal transmission. This Mesobuthus eupeus (Lesser Asian scorpion) protein is Sodium channel neurotoxin MeuNaTxalpha-12.